A 216-amino-acid chain; its full sequence is Peptide deformylase 1 (216 aa).

Fe cation is bound by residues cysteine 135 and histidine 177. Glutamate 178 is an active-site residue. Histidine 181 contributes to the Fe cation binding site.

It belongs to the polypeptide deformylase family. The cofactor is Fe(2+).

It carries out the reaction N-terminal N-formyl-L-methionyl-[peptide] + H2O = N-terminal L-methionyl-[peptide] + formate. In terms of biological role, removes the formyl group from the N-terminal Met of newly synthesized proteins. Requires at least a dipeptide for an efficient rate of reaction. N-terminal L-methionine is a prerequisite for activity but the enzyme has broad specificity at other positions. This chain is Peptide deformylase 1, found in Streptomyces avermitilis (strain ATCC 31267 / DSM 46492 / JCM 5070 / NBRC 14893 / NCIMB 12804 / NRRL 8165 / MA-4680).